The sequence spans 136 residues: Large ribosomal subunit protein bL17 (136 aa).

Belongs to the bacterial ribosomal protein bL17 family. In terms of assembly, part of the 50S ribosomal subunit. Contacts protein L32.

The protein is Large ribosomal subunit protein bL17 of Methylobacterium radiotolerans (strain ATCC 27329 / DSM 1819 / JCM 2831 / NBRC 15690 / NCIMB 10815 / 0-1).